The chain runs to 283 residues: 2-dehydro-3-deoxyphosphooctonate aldolase (283 aa).

It belongs to the KdsA family.

It is found in the cytoplasm. It catalyses the reaction D-arabinose 5-phosphate + phosphoenolpyruvate + H2O = 3-deoxy-alpha-D-manno-2-octulosonate-8-phosphate + phosphate. The protein operates within carbohydrate biosynthesis; 3-deoxy-D-manno-octulosonate biosynthesis; 3-deoxy-D-manno-octulosonate from D-ribulose 5-phosphate: step 2/3. Its pathway is bacterial outer membrane biogenesis; lipopolysaccharide biosynthesis. This Laribacter hongkongensis (strain HLHK9) protein is 2-dehydro-3-deoxyphosphooctonate aldolase.